The following is a 767-amino-acid chain: Pyrin (767 aa).

In terms of domain architecture, Pyrin spans 1–92 (MAKTLGDHLL…AEELRKATGT (92 aa)). The tract at residues 94 to 219 (HLIEENRVGG…LQGLYNNAPG (126 aa)) is disordered. Composition is skewed to polar residues over residues 126 to 142 (GTQQ…SSQA), 165 to 176 (LDSQTKPWTRST), and 183 to 208 (TQGT…SSAG). Position 241 is a phosphoserine (serine 241). A disordered region spans residues 311–346 (TSLIGEERCPTSWTENGNGSPETTESSGETAGSILS). Positions 321–340 (TSWTENGNGSPETTESSGET) are enriched in polar residues. The B box-type zinc finger occupies 439–481 (QSLPQCPRHMKQVLLLFCEDHREPICLICRLSLEHQGHRVRPI). Residues cysteine 444, histidine 447, cysteine 467, and histidine 473 each contribute to the Zn(2+) site. The stretch at 481–510 (IEEAALEYKEQIREQLERLREMRGYVEEHR) forms a coiled coil. The segment at 489 to 647 (KEQIREQLER…CFSEMLSSEM (159 aa)) is required for homotrimerization and induction of pyroptosomes. The disordered stretch occupies residues 697–719 (GGSEPKDYLHPQPAQDTPELHEI).

As to quaternary structure, homotrimer. Interacts (via the B box-type zinc finger) with PSTPIP1. Interacts (via the B30.2/SPRY domain) with several components of the inflammasome complex, including CASP1 p20 and p10 subunits, CASP5, PYCARD, NLRP1, NLRP2 and NLRP3, as well as with unprocessed IL1B; this interaction may lead to autophagic degradation of these proteins. Component of the AIM2 PANoptosome complex, a multiprotein complex that drives inflammatory cell death (PANoptosis). Interacts with NFKBIA and RELA. Interacts weakly with VASP and ACTR3. Interacts with active ULK1 (phosphorylated on 'Ser-317') and BECN1 simultaneously. Also interacts with ATG16L1 (via WD repeats), and with ATG8 family members, including GABARAP, GABARAPL1 and, to a lesser extent, GABARAPL2, MAP1LC3A/LC3A and MAP1LC3C/LC3C. Interacts with TRIM21. Interacts with YWHAB, YWHAE, YWHAG, YWHAH, YWHAQ and YWHAZ; the interaction is required for the down-regulation of pyrin pro-inflammatory activity. Post-translationally, phosphorylation at Ser-241 is required for the interaction with 14-3-3 proteins and down-regulation of pyrin pro-inflammatory activity. In terms of processing, degraded along with the delivery of its substrates to autolysosomal compartments (at protein level). In terms of tissue distribution, expressed in spleen peripheral blood granulocytes. Not expressed in lymphocytes, thymus, testis, ovary, heart, brain, lung, liver, kidney and muscle.

The protein localises to the cytoplasm. It localises to the cytoskeleton. The protein resides in the cell projection. It is found in the ruffle. Its subcellular location is the lamellipodium. The protein localises to the cytoplasmic vesicle. It localises to the autophagosome. The protein resides in the nucleus. Functionally, involved in the regulation of innate immunity and the inflammatory response in response to IFNG/IFN-gamma. Organizes autophagic machinery by serving as a platform for the assembly of ULK1, Beclin 1/BECN1, ATG16L1, and ATG8 family members and recognizes specific autophagy targets, thus coordinating target recognition with assembly of the autophagic apparatus and initiation of autophagy. Acts as an autophagy receptor for the degradation of several inflammasome components, including CASP1, NLRP1 and NLRP3, hence preventing excessive IL1B- and IL18-mediated inflammation. However, it can also have a positive effect in the inflammatory pathway, acting as an innate immune sensor that triggers PYCARD/ASC specks formation, caspase-1 activation, and IL1B and IL18 production. Together with AIM2, also acts as a mediator of pyroptosis, necroptosis and apoptosis (PANoptosis), an integral part of host defense against pathogens, in response to bacterial infection. It is required for PSTPIP1-induced PYCARD/ASC oligomerization and inflammasome formation. Recruits PSTPIP1 to inflammasomes, and is required for PSTPIP1 oligomerization. The polypeptide is Pyrin (Mus musculus (Mouse)).